A 260-amino-acid chain; its full sequence is NH(3)-dependent NAD(+) synthetase (260 aa).

Residue G31–S38 participates in ATP binding. D37 is a Mg(2+) binding site. A deamido-NAD(+)-binding site is contributed by R112. T132 lines the ATP pocket. E137 lines the Mg(2+) pocket. ATP-binding residues include K161 and S183.

Belongs to the NAD synthetase family. In terms of assembly, homodimer.

It catalyses the reaction deamido-NAD(+) + NH4(+) + ATP = AMP + diphosphate + NAD(+) + H(+). The protein operates within cofactor biosynthesis; NAD(+) biosynthesis; NAD(+) from deamido-NAD(+) (ammonia route): step 1/1. Its function is as follows. Catalyzes the ATP-dependent amidation of deamido-NAD to form NAD. Uses ammonia as a nitrogen source. This Helicobacter pylori (strain P12) protein is NH(3)-dependent NAD(+) synthetase.